The chain runs to 319 residues: N-acetyllactosaminide alpha-1,3-galactosyltransferase-like 1 (319 aa).

At 1–6 (MQYKKE) the chain is on the cytoplasmic side. The helical; Signal-anchor for type II membrane protein transmembrane segment at 7 to 26 (ALLLMLFAVLLALTQRFSYS) threads the bilayer. Residues 27–319 (RTKDHLQKMY…IKHIKIAWKP (293 aa)) are Lumenal-facing. N-linked (GlcNAc...) asparagine glycans are attached at residues Asn89 and Asn101. Substrate is bound by residues 97-102 (FATGNF), 188-190 (AVN), and 210-213 (HAWW). Glu278 (nucleophile) is an active-site residue.

Belongs to the glycosyltransferase 6 family. It depends on Mn(2+) as a cofactor.

It is found in the golgi apparatus. The protein localises to the golgi stack membrane. The catalysed reaction is a beta-D-galactosyl-(1-&gt;4)-N-acetyl-beta-D-glucosaminyl derivative + UDP-alpha-D-galactose = an alpha-D-galactosyl-(1-&gt;3)-beta-D-galactosyl-(1-&gt;4)-N-acetyl-beta-D-glucosaminyl derivative + UDP + H(+). The protein operates within protein modification; protein glycosylation. Functionally, synthesizes the galactose-alpha(1,3)-galactose group by catalyzing the transfer of a galactose residue, with an alpha-1,3 linkage, on terminal lactosaminide (Gal-beta-1,4-GlcNAc-R) disaccharide borne by a glycoprotein or a glycolipid. The sequence is that of N-acetyllactosaminide alpha-1,3-galactosyltransferase-like 1 (Ggta1l1) from Mus musculus (Mouse).